The primary structure comprises 162 residues: uncharacterized protein (162 aa).

A coiled-coil region spans residues 129-161 (DLNAVLKNLKEVEKKSLKISKEELKKKLDQILG).

This is an uncharacterized protein from Aquifex aeolicus (strain VF5).